Reading from the N-terminus, the 474-residue chain is Aspartyl/glutamyl-tRNA(Asn/Gln) amidotransferase subunit B (474 aa).

This sequence belongs to the GatB/GatE family. GatB subfamily. In terms of assembly, heterotrimer of A, B and C subunits.

The enzyme catalyses L-glutamyl-tRNA(Gln) + L-glutamine + ATP + H2O = L-glutaminyl-tRNA(Gln) + L-glutamate + ADP + phosphate + H(+). It carries out the reaction L-aspartyl-tRNA(Asn) + L-glutamine + ATP + H2O = L-asparaginyl-tRNA(Asn) + L-glutamate + ADP + phosphate + 2 H(+). Allows the formation of correctly charged Asn-tRNA(Asn) or Gln-tRNA(Gln) through the transamidation of misacylated Asp-tRNA(Asn) or Glu-tRNA(Gln) in organisms which lack either or both of asparaginyl-tRNA or glutaminyl-tRNA synthetases. The reaction takes place in the presence of glutamine and ATP through an activated phospho-Asp-tRNA(Asn) or phospho-Glu-tRNA(Gln). This Lactiplantibacillus plantarum (strain ATCC BAA-793 / NCIMB 8826 / WCFS1) (Lactobacillus plantarum) protein is Aspartyl/glutamyl-tRNA(Asn/Gln) amidotransferase subunit B.